The following is a 116-amino-acid chain: Large ribosomal subunit protein bL19 (116 aa).

It belongs to the bacterial ribosomal protein bL19 family.

Its function is as follows. This protein is located at the 30S-50S ribosomal subunit interface and may play a role in the structure and function of the aminoacyl-tRNA binding site. This chain is Large ribosomal subunit protein bL19, found in Pseudomonas entomophila (strain L48).